The sequence spans 400 residues: Double C2-like domain-containing protein alpha (400 aa).

The interval 1 to 89 (MRGRRGDRMT…DSYDSDDATA (89 aa)) is interaction with UNC13D and DYNLT1. C2 domains follow at residues 89–211 (ALGT…HFNI) and 251–384 (ERGR…ERWH). 9 residues coordinate Ca(2+): aspartate 120, aspartate 126, aspartate 181, aspartate 183, aspartate 282, aspartate 288, aspartate 342, aspartate 344, and aspartate 350. The interaction with UNC13D stretch occupies residues 215 to 400 (RQVPLASPSS…PPAAGALSSA (186 aa)).

Interacts (via N-terminus) with UNC13A. Interacts with cytoplasmic dynein light chain DYNLT1. Interacts with UNC13D. Ca(2+) serves as cofactor. In terms of tissue distribution, predominantly expressed in brain. Also expressed in testis.

Its subcellular location is the lysosome. The protein resides in the cytoplasmic vesicle. It is found in the secretory vesicle. The protein localises to the synaptic vesicle membrane. It localises to the synapse. Its subcellular location is the synaptosome. Its function is as follows. Calcium sensor which most probably regulates fusion of vesicles with membranes. Binds calcium and phospholipids. May be involved in calcium dependent neurotransmitter release through the interaction with UNC13A. May be involved in calcium-dependent spontaneous release of neurotransmitter in absence of action potentials in neuronal cells. Regulates Ca(2+)-dependent secretory lysosome exocytosis in mast cells. The sequence is that of Double C2-like domain-containing protein alpha (DOC2A) from Homo sapiens (Human).